Consider the following 216-residue polypeptide: Probable transaldolase (216 aa).

The active-site Schiff-base intermediate with substrate is Lys-85.

Belongs to the transaldolase family. Type 3B subfamily.

Its subcellular location is the cytoplasm. The catalysed reaction is D-sedoheptulose 7-phosphate + D-glyceraldehyde 3-phosphate = D-erythrose 4-phosphate + beta-D-fructose 6-phosphate. Its pathway is carbohydrate degradation; pentose phosphate pathway; D-glyceraldehyde 3-phosphate and beta-D-fructose 6-phosphate from D-ribose 5-phosphate and D-xylulose 5-phosphate (non-oxidative stage): step 2/3. Functionally, transaldolase is important for the balance of metabolites in the pentose-phosphate pathway. This chain is Probable transaldolase, found in Dehalococcoides mccartyi (strain ATCC BAA-2266 / KCTC 15142 / 195) (Dehalococcoides ethenogenes (strain 195)).